Here is a 190-residue protein sequence, read N- to C-terminus: NADH dehydrogenase [ubiquinone] iron-sulfur protein 3 (190 aa).

Belongs to the complex I 30 kDa subunit family. As to quaternary structure, complex I is composed of about 45 different subunits. This is a component of the iron-sulfur (IP) fragment of the enzyme.

The protein localises to the mitochondrion inner membrane. It carries out the reaction a ubiquinone + NADH + 5 H(+)(in) = a ubiquinol + NAD(+) + 4 H(+)(out). Functionally, core subunit of the mitochondrial membrane respiratory chain NADH dehydrogenase (Complex I) that is believed to belong to the minimal assembly required for catalysis. Complex I functions in the transfer of electrons from NADH to the respiratory chain. The immediate electron acceptor for the enzyme is believed to be ubiquinone. The polypeptide is NADH dehydrogenase [ubiquinone] iron-sulfur protein 3 (NAD9) (Solanum tuberosum (Potato)).